Here is a 239-residue protein sequence, read N- to C-terminus: tRNA (guanine-N(7)-)-methyltransferase (239 aa).

Positions 69, 94, 121, and 144 each coordinate S-adenosyl-L-methionine. The active site involves Asp-144. Lys-148 provides a ligand contact to substrate. Positions 150-155 (RHNKRR) are interaction with RNA. Residues Asp-180 and 217-220 (TKFE) each bind substrate.

The protein belongs to the class I-like SAM-binding methyltransferase superfamily. TrmB family. In terms of assembly, monomer.

It catalyses the reaction guanosine(46) in tRNA + S-adenosyl-L-methionine = N(7)-methylguanosine(46) in tRNA + S-adenosyl-L-homocysteine. It participates in tRNA modification; N(7)-methylguanine-tRNA biosynthesis. Functionally, catalyzes the formation of N(7)-methylguanine at position 46 (m7G46) in tRNA. The polypeptide is tRNA (guanine-N(7)-)-methyltransferase (Serratia proteamaculans (strain 568)).